The primary structure comprises 232 residues: Lipoprotein-releasing system ATP-binding protein LolD (232 aa).

One can recognise an ABC transporter domain in the interval 11–231; the sequence is VYLHDIKREY…SLENGHVVEL (221 aa). Residue 47–54 coordinates ATP; sequence APSGSGKS.

The protein belongs to the ABC transporter superfamily. Lipoprotein translocase (TC 3.A.1.125) family. In terms of assembly, the complex is composed of two ATP-binding proteins (LolD) and two transmembrane proteins (LolC and LolE).

It localises to the cell inner membrane. In terms of biological role, part of the ABC transporter complex LolCDE involved in the translocation of mature outer membrane-directed lipoproteins, from the inner membrane to the periplasmic chaperone, LolA. Responsible for the formation of the LolA-lipoprotein complex in an ATP-dependent manner. This chain is Lipoprotein-releasing system ATP-binding protein LolD, found in Nitrobacter winogradskyi (strain ATCC 25391 / DSM 10237 / CIP 104748 / NCIMB 11846 / Nb-255).